The primary structure comprises 869 residues: DNA mismatch repair protein MutS (869 aa).

602–609 (GPNMSGKS) is an ATP binding site.

This sequence belongs to the DNA mismatch repair MutS family.

This protein is involved in the repair of mismatches in DNA. It is possible that it carries out the mismatch recognition step. This protein has a weak ATPase activity. This is DNA mismatch repair protein MutS from Staphylococcus carnosus (strain TM300).